The following is a 168-amino-acid chain: Sperm acrosome-associated protein 9 (168 aa).

In terms of assembly, microtubule inner protein component of sperm flagellar doublet microtubules. Interacts with CABP1 and CALR. Interacts with INCA1. Interacts with microtubules. In terms of tissue distribution, testis-specific. Expressed in round spermatids.

It is found in the cytoplasm. The protein localises to the cytoplasmic vesicle. Its subcellular location is the secretory vesicle. It localises to the acrosome. The protein resides in the cytoskeleton. It is found in the cilium basal body. The protein localises to the flagellum axoneme. Its subcellular location is the cilium axoneme. It localises to the nucleus. Functionally, microtubule inner protein (MIP) part of the dynein-decorated doublet microtubules (DMTs) of multiciliated respiratory cells and the distal singlet microtubules of monoflagellated spermatozoa. Forms an extensive interaction network cross-linking the lumen of axonemal doublet microtubules. This Rattus norvegicus (Rat) protein is Sperm acrosome-associated protein 9 (Spaca9).